We begin with the raw amino-acid sequence, 384 residues long: DNA dC-&gt;dU-editing enzyme APOBEC-3G (384 aa).

Residues Met-1–Ser-60 form an essential for cytoplasmic localization region. 2 consecutive CMP/dCMP-type deaminase domains span residues His-29 to Leu-138 and Gly-214 to Leu-328. A Phosphothreonine; by PKA modification is found at Thr-32. His-65, Cys-97, and Cys-100 together coordinate Zn(2+). Residues Glu-209–Ser-336 form a necessary for homooligomerization region. The interaction with DNA stretch occupies residues Arg-213–Arg-215. A Phosphothreonine; by PKA and CAMK2 modification is found at Thr-218. A Zn(2+)-binding site is contributed by His-257. Glu-259 serves as the catalytic Proton donor. Residues Cys-288 and Cys-291 each contribute to the Zn(2+) site. Residues Arg-313 to Arg-320 are interaction with DNA.

This sequence belongs to the cytidine and deoxycytidylate deaminase family. Homodimer. Homooligomer. Can bind RNA to form ribonucleoprotein complexes of high-molecular-mass (HMM) or low-molecular-mass (LMM). HMM is inactive and heterogeneous in protein composition because of binding nonselectively to cellular RNAs, which in turn are associated with variety of cellular proteins. The LMM form which is enzymatically active has few or no RNAs associated. Its ability to form homooligomer is distinct from its ability to assemble into HMM. Interacts with APOBEC3B, APOBEC3F, MOV10, AGO2, EIF4E, EIF4ENIF1, DCP2 and DDX6 in an RNA-dependent manner. Interacts with AGO1, AGO3 and PKA/PRKACA. Zn(2+) is required as a cofactor.

The protein localises to the cytoplasm. It is found in the nucleus. It localises to the P-body. It carries out the reaction a 2'-deoxycytidine in single-stranded DNA + H2O + H(+) = a 2'-deoxyuridine in single-stranded DNA + NH4(+). Functionally, DNA deaminase (cytidine deaminase) which acts as an inhibitor of retrovirus replication and retrotransposon mobility via deaminase-dependent and -independent mechanisms. Exhibits antiviral activity against vif-deficient: HIV-1 and simian immunodeficiency viruses (SIVs) and also against simian foamy virus (SFV). After the penetration of retroviral nucleocapsids into target cells of infection and the initiation of reverse transcription, it can induce the conversion of cytosine to uracil in the minus-sense single-strand viral DNA, leading to G-to-A hypermutations in the subsequent plus-strand viral DNA. The resultant detrimental levels of mutations in the proviral genome, along with a deamination-independent mechanism that works prior to the proviral integration, together exert efficient antiretroviral effects in infected target cells. Selectively targets single-stranded DNA and does not deaminate double-stranded DNA or single- or double-stranded RNA. May inhibit the mobility of LTR retrotransposons. This chain is DNA dC-&gt;dU-editing enzyme APOBEC-3G (APOBEC3G), found in Pan troglodytes (Chimpanzee).